The chain runs to 188 residues: Ribosome-recycling factor (188 aa).

The protein belongs to the RRF family.

Its subcellular location is the cytoplasm. Its function is as follows. Responsible for the release of ribosomes from messenger RNA at the termination of protein biosynthesis. May increase the efficiency of translation by recycling ribosomes from one round of translation to another. This chain is Ribosome-recycling factor, found in Anaeromyxobacter sp. (strain K).